The following is a 189-amino-acid chain: Thymidine kinase (189 aa).

Residues 9–16 (GTMNSGKS) and 85–88 (DEAQ) contribute to the ATP site. The Proton acceptor role is filled by Glu86. Cys143, Cys146, Cys180, and His183 together coordinate Zn(2+).

It belongs to the thymidine kinase family. In terms of assembly, homotetramer.

It localises to the cytoplasm. The catalysed reaction is thymidine + ATP = dTMP + ADP + H(+). The sequence is that of Thymidine kinase from Lactococcus lactis subsp. lactis (strain IL1403) (Streptococcus lactis).